The following is a 211-amino-acid chain: Troponin I, cardiac muscle (211 aa).

The tract at residues 1–23 is disordered; it reads MADESGDAAGCPPPAPAPIRRQS. Ala-2 carries the post-translational modification N-acetylalanine. Phosphoserine is present on Ser-5. Ser-23 and Ser-24 each carry phosphoserine; by PKA and PKD/PRKD1. Tyr-27 is modified (phosphotyrosine). Thr-32 is subject to Phosphothreonine; by STK4/MST1. The tract at residues 33–80 is involved in binding TNC; that stretch reads EPHAKKKSKISASRKLQLKTLMLQIAKQELEREAEERRGEKGRALSTR. 2 positions are modified to phosphoserine; by PKC/PRKCE: Ser-43 and Ser-45. At Thr-52 the chain carries Phosphothreonine; by STK4/MST1. A Phosphoserine modification is found at Ser-78. A Phosphothreonine modification is found at Thr-79. Phosphothreonine; by STK4/MST1 occurs at positions 130 and 144. The interval 130-150 is involved in binding TNC and actin; sequence TQKIFDLRGKFKRPTLRRVRI. At Ser-151 the chain carries Phosphoserine; by PAK3. A Phosphoserine modification is found at Ser-167. At Thr-182 the chain carries Phosphothreonine. A Phosphoserine modification is found at Ser-200.

It belongs to the troponin I family. Binds to actin and tropomyosin. Interacts with TRIM63. Interacts with STK4/MST1. Phosphorylated at Ser-23 and Ser-24 by PRKD1; phosphorylation reduces myofilament calcium sensitivity. Phosphorylated preferentially at Thr-32. Phosphorylation by STK4/MST1 alters its binding affinity to TNNC1 (cardiac Tn-C) and TNNT2 (cardiac Tn-T). Phosphorylated at Ser-43 and Ser-45 by PRKCE; phosphorylation increases myocardium contractile dysfunction.

Troponin I is the inhibitory subunit of troponin, the thin filament regulatory complex which confers calcium-sensitivity to striated muscle actomyosin ATPase activity. This chain is Troponin I, cardiac muscle (TNNI3), found in Canis lupus familiaris (Dog).